The chain runs to 121 residues: MDLIRKIEAQNKKNEAFVFNVGDTVRVVYKIIEGSNERLQSFEGIVISFQNKGIGKTFLIRKISSGIGVEKIFPVYSPIIEKVEVLRRGKVRRAKLYYMRNRIGKAAIKIKERLTIKKVKH.

It belongs to the bacterial ribosomal protein bL19 family.

In terms of biological role, this protein is located at the 30S-50S ribosomal subunit interface and may play a role in the structure and function of the aminoacyl-tRNA binding site. The chain is Large ribosomal subunit protein bL19 from Borreliella burgdorferi (strain ZS7) (Borrelia burgdorferi).